The primary structure comprises 202 residues: FMN-dependent NADH:quinone oxidoreductase 1 (202 aa).

Residues Ser-9, 15 to 17 (SAS), 95 to 98 (MYNF), and 139 to 142 (TSGG) contribute to the FMN site.

Belongs to the azoreductase type 1 family. In terms of assembly, homodimer. It depends on FMN as a cofactor.

It carries out the reaction 2 a quinone + NADH + H(+) = 2 a 1,4-benzosemiquinone + NAD(+). The enzyme catalyses N,N-dimethyl-1,4-phenylenediamine + anthranilate + 2 NAD(+) = 2-(4-dimethylaminophenyl)diazenylbenzoate + 2 NADH + 2 H(+). In terms of biological role, quinone reductase that provides resistance to thiol-specific stress caused by electrophilic quinones. Functionally, also exhibits azoreductase activity. Catalyzes the reductive cleavage of the azo bond in aromatic azo compounds to the corresponding amines. This Pseudomonas syringae pv. tomato (strain ATCC BAA-871 / DC3000) protein is FMN-dependent NADH:quinone oxidoreductase 1.